A 314-amino-acid polypeptide reads, in one-letter code: Malate dehydrogenase (314 aa).

NAD(+) contacts are provided by residues 11–16 (GSGNIG) and Asp35. Residues Arg84 and Arg90 each coordinate substrate. NAD(+)-binding positions include Asn97 and 120 to 122 (ITN). Substrate contacts are provided by Asn122 and Arg153. The active-site Proton acceptor is the His177.

This sequence belongs to the LDH/MDH superfamily. MDH type 3 family.

It carries out the reaction (S)-malate + NAD(+) = oxaloacetate + NADH + H(+). Its function is as follows. Catalyzes the reversible oxidation of malate to oxaloacetate. The polypeptide is Malate dehydrogenase (Rickettsia rickettsii (strain Iowa)).